Reading from the N-terminus, the 61-residue chain is Large ribosomal subunit protein uL30 (61 aa).

Belongs to the universal ribosomal protein uL30 family. As to quaternary structure, part of the 50S ribosomal subunit.

This chain is Large ribosomal subunit protein uL30, found in Thermosipho africanus (strain TCF52B).